The sequence spans 266 residues: uncharacterized protein (266 aa).

The N-terminal stretch at 1-22 (MGYLKRLVLYIVIMVMSVFIIG) is a signal peptide. C23 carries the N-palmitoyl cysteine lipid modification. C23 carries the S-diacylglycerol cysteine lipid modification.

The protein belongs to the staphylococcal tandem lipoprotein family.

The protein localises to the cell membrane. This is an uncharacterized protein from Staphylococcus aureus (strain USA300).